We begin with the raw amino-acid sequence, 713 residues long: Phosphoribosylformylglycinamidine synthase subunit PurL (713 aa).

His-32 is an active-site residue. Tyr-35 lines the ATP pocket. Mg(2+) is bound at residue Glu-76. Substrate-binding positions include 77–80 (SHNH) and Arg-99. His-78 acts as the Proton acceptor in catalysis. Asp-100 contributes to the Mg(2+) binding site. Gln-224 is a binding site for substrate. Asp-252 is a Mg(2+) binding site. 296 to 298 (ESQ) contacts substrate. 2 residues coordinate ATP: Asp-471 and Gly-508. Asn-509 serves as a coordination point for Mg(2+). Residue Ser-511 coordinates substrate.

This sequence belongs to the FGAMS family. In terms of assembly, monomer. Part of the FGAM synthase complex composed of 1 PurL, 1 PurQ and 2 PurS subunits.

It is found in the cytoplasm. It catalyses the reaction N(2)-formyl-N(1)-(5-phospho-beta-D-ribosyl)glycinamide + L-glutamine + ATP + H2O = 2-formamido-N(1)-(5-O-phospho-beta-D-ribosyl)acetamidine + L-glutamate + ADP + phosphate + H(+). It participates in purine metabolism; IMP biosynthesis via de novo pathway; 5-amino-1-(5-phospho-D-ribosyl)imidazole from N(2)-formyl-N(1)-(5-phospho-D-ribosyl)glycinamide: step 1/2. Functionally, part of the phosphoribosylformylglycinamidine synthase complex involved in the purines biosynthetic pathway. Catalyzes the ATP-dependent conversion of formylglycinamide ribonucleotide (FGAR) and glutamine to yield formylglycinamidine ribonucleotide (FGAM) and glutamate. The FGAM synthase complex is composed of three subunits. PurQ produces an ammonia molecule by converting glutamine to glutamate. PurL transfers the ammonia molecule to FGAR to form FGAM in an ATP-dependent manner. PurS interacts with PurQ and PurL and is thought to assist in the transfer of the ammonia molecule from PurQ to PurL. In Thermococcus sibiricus (strain DSM 12597 / MM 739), this protein is Phosphoribosylformylglycinamidine synthase subunit PurL.